Consider the following 117-residue polypeptide: Large ribosomal subunit protein bL19 (117 aa).

The protein belongs to the bacterial ribosomal protein bL19 family.

In terms of biological role, this protein is located at the 30S-50S ribosomal subunit interface and may play a role in the structure and function of the aminoacyl-tRNA binding site. The polypeptide is Large ribosomal subunit protein bL19 (Aliivibrio fischeri (strain ATCC 700601 / ES114) (Vibrio fischeri)).